The primary structure comprises 253 residues: uncharacterized protein (253 aa).

The segment at 211 to 241 (TTRRKRYREDRDSGEDLGAESKRGNGSVRYT) is disordered.

This is an uncharacterized protein from Ictalurid herpesvirus 1 (strain Auburn) (IcHV-1).